A 147-amino-acid chain; its full sequence is Large ribosomal subunit protein uL13 (147 aa).

This sequence belongs to the universal ribosomal protein uL13 family. As to quaternary structure, part of the 50S ribosomal subunit.

This protein is one of the early assembly proteins of the 50S ribosomal subunit, although it is not seen to bind rRNA by itself. It is important during the early stages of 50S assembly. The chain is Large ribosomal subunit protein uL13 from Leuconostoc mesenteroides subsp. mesenteroides (strain ATCC 8293 / DSM 20343 / BCRC 11652 / CCM 1803 / JCM 6124 / NCDO 523 / NBRC 100496 / NCIMB 8023 / NCTC 12954 / NRRL B-1118 / 37Y).